Reading from the N-terminus, the 923-residue chain is Probable ribosylation factor GTPase-activating protein cnt6 (923 aa).

Ser207 carries the phosphoserine modification. Positions 444–455 (TTRRDKGREMHR) are enriched in basic and acidic residues. The disordered stretch occupies residues 444 to 476 (TTRRDKGREMHRSQVIQTSGRPKSMAPPSPSPI). In terms of domain architecture, PH spans 526–632 (KIFKEGLLLV…WIEAICEAAK (107 aa)). The 124-residue stretch at 714–837 (NIFIQMLRKT…AFIDFAGVDA (124 aa)) folds into the Arf-GAP domain. The C4-type zinc finger occupies 730-754 (CADCGSVKDVTWCSINIPVVLCIEC).

It localises to the cytoplasm. Its subcellular location is the cell tip. GTPase-activating protein for the ADP ribosylation factor family. The protein is Probable ribosylation factor GTPase-activating protein cnt6 (cnt6) of Schizosaccharomyces pombe (strain 972 / ATCC 24843) (Fission yeast).